A 389-amino-acid chain; its full sequence is Tyrosinase-like protein phomQ1 (389 aa).

Residues 53–73 (TIIVVSVITFAAIIGCWVFLS) form a helical membrane-spanning segment. Residues histidine 141 and histidine 150 each coordinate Cu cation. N-linked (GlcNAc...) asparagine glycosylation occurs at asparagine 220. Cu cation is bound by residues histidine 290 and histidine 316.

The protein belongs to the tyrosinase family. Requires Cu(2+) as cofactor.

It localises to the membrane. Its pathway is mycotoxin biosynthesis. Tyrosinase-like protein; part of the gene cluster that mediates the biosynthesis of the phomopsins, a group of hexapeptide mycotoxins which infects lupins and causes lupinosis disease in livestock. Within the pathway, phomQ1 functions as a halogenase, converting. The pathway starts with the processing of the precursor phomA by several endopeptidases including kexin proteases as well as the cluster-specific S41 family peptidase phomP1 and the oligopeptidase phomG to produce 10 identical copies of the hexapeptide Tyr-Val-Ile-Pro-Ile-Asp. After being excised from the precursor peptide, the core peptides are cyclized and modified post-translationally by enzymes encoded within the gene cluster. The timing and order of proteolysis of the phomA precursor and PTMs are still unknown. Two tyrosinase-like enzymes, phomQ1 and phomQ2, catalyze the chlorination and hydroxylation of Tyr, respectively. PhomYb, is proposed to be involved in the construction of the macrocyclic structure. The other 4 ustYa family proteins may be involved in PTMs that generate the unique structure of phomopsin A. PhomYa is required for the hydroxylation of C-beta of Tyr. PhomYc, phomYd, and phomYe are responsible for the biosynthesis of 2,3-dehydroisoleucine (dIle), 2,3-dehydroaspartic acid (dAsp), and 3,4-dehydroproline (dPro), respectively. While dIle formation by phomYc is indispensable for the installation of dAsp by phomYd, the order of the other PTMs have not been elucidated yet. Most of the biosynthetic enzymes likely have broad substrate specificity, and thus, there might be a metabolic grid from a precursor to phomopsin A. The enzyme(s) responsible for the biosynthesis of 3,4-dehydrovaline (dVal) have also not been identified yet. Finally, phomM acts as an S-adenosylmethionine-dependent alpha-N-methyltransferase that catalyzes two successive N-methylation reactions, converting N-desmethyl-phomopsin A to phomopsin A and phomopsin A further to an N,N-dimethylated congener called phomopsin E. This chain is Tyrosinase-like protein phomQ1, found in Diaporthe leptostromiformis (Lupinosis disease fungus).